A 321-amino-acid polypeptide reads, in one-letter code: Large ribosomal RNA subunit accumulation protein YCED homolog 1, chloroplastic (321 aa).

A chloroplast-targeting transit peptide spans 1 to 32; the sequence is MSLVCSLSCVAPLPQTKQSRPSFLKLETCTLS.

This sequence belongs to the DUF177 domain family.

The protein localises to the plastid. It is found in the chloroplast stroma. Its subcellular location is the chloroplast nucleoid. Functionally, plays a role in synthesis, processing and/or stability of 23S rRNA. Required for embryogenesis. The polypeptide is Large ribosomal RNA subunit accumulation protein YCED homolog 1, chloroplastic (Arabidopsis thaliana (Mouse-ear cress)).